The primary structure comprises 315 residues: Thioredoxin reductase (315 aa).

Position 34–41 (34–41 (EGQKVGGQ)) interacts with FAD. A disulfide bond links cysteine 134 and cysteine 137. 282–291 (DIRVKSLRQV) serves as a coordination point for FAD.

It belongs to the class-II pyridine nucleotide-disulfide oxidoreductase family. Homodimer. It depends on FAD as a cofactor.

The protein localises to the cytoplasm. The enzyme catalyses [thioredoxin]-dithiol + NADP(+) = [thioredoxin]-disulfide + NADPH + H(+). This Peptoclostridium acidaminophilum (Eubacterium acidaminophilum) protein is Thioredoxin reductase (trxB).